Consider the following 435-residue polypeptide: Methionine aminopeptidase 2-2 (435 aa).

The segment at Met-1–Asn-92 is disordered. Low complexity predominate over residues Asp-24–Ala-33. Residues Gly-34–Asp-45 show a composition bias toward acidic residues. Over residues Ala-59–Gly-73 the composition is skewed to basic residues. Residue His-197 coordinates substrate. A divalent metal cation is bound by residues Asp-217, Asp-228, and His-297. His-305 contacts substrate. A divalent metal cation is bound by residues Glu-330 and Glu-425.

The protein belongs to the peptidase M24A family. Methionine aminopeptidase eukaryotic type 2 subfamily. The cofactor is Co(2+). Zn(2+) serves as cofactor. Mn(2+) is required as a cofactor. It depends on Fe(2+) as a cofactor.

The protein resides in the cytoplasm. The catalysed reaction is Release of N-terminal amino acids, preferentially methionine, from peptides and arylamides.. Cotranslationally removes the N-terminal methionine from nascent proteins. The N-terminal methionine is often cleaved when the second residue in the primary sequence is small and uncharged (Met-Ala-, Cys, Gly, Pro, Ser, Thr, or Val). This Aspergillus clavatus (strain ATCC 1007 / CBS 513.65 / DSM 816 / NCTC 3887 / NRRL 1 / QM 1276 / 107) protein is Methionine aminopeptidase 2-2.